Reading from the N-terminus, the 49-residue chain is MRVQITLACTETGDKNYITTKNKRNNPERLELKKYSPRLKRTTLHRETK.

Positions 18–49 (ITTKNKRNNPERLELKKYSPRLKRTTLHRETK) are disordered. Positions 25–34 (NNPERLELKK) are enriched in basic and acidic residues.

Belongs to the bacterial ribosomal protein bL33 family.

This chain is Large ribosomal subunit protein bL33, found in Lysinibacillus sphaericus (strain C3-41).